We begin with the raw amino-acid sequence, 423 residues long: Carboxypeptidase B2 (423 aa).

The signal sequence occupies residues 1 to 22; it reads MKLYSLGVLVATVLFCGEHAFA. A propeptide spans 23–114 (activation peptide); the sequence is FQRGQVLSAL…QTSNDTISPR (92 aa). 4 N-linked (GlcNAc...) asparagine glycosylation sites follow: asparagine 44, asparagine 73, asparagine 85, and asparagine 108. Residues 122 to 419 enclose the Peptidase M14 domain; the sequence is QYHSLNEIYS…VAVAKIASHV (298 aa). A disulfide bridge links cysteine 178 with cysteine 191. The Zn(2+) site is built by histidine 181 and glutamate 184. Residues 181 to 184 and arginine 239 contribute to the substrate site; that span reads HARE. N-linked (GlcNAc...) asparagine glycosylation is present at asparagine 241. 2 disulfides stabilise this stretch: cysteine 250-cysteine 274 and cysteine 265-cysteine 279. A substrate-binding site is contributed by 256–257; that stretch reads NR. Zn(2+) is bound at residue histidine 310. Substrate-binding positions include 311 to 312 and tyrosine 363; that span reads SY. Residue glutamate 385 is the Proton donor/acceptor of the active site.

It belongs to the peptidase M14 family. The cofactor is Zn(2+).

Its subcellular location is the secreted. It carries out the reaction Release of C-terminal Arg and Lys from a polypeptide.. Its activity is regulated as follows. TAFI/CPB2 is unique among carboxypeptidases in that it spontaneously inactivates with a short half-life, a property that is crucial for its role in controlling blood clot lysis. The zymogen is stabilized by interactions with the activation peptide. Release of the activation peptide increases a dynamic flap mobility and in time this leads to conformational changes that disrupt the catalytic site and expose a cryptic thrombin-cleavage site present at Arg-324. Its function is as follows. Cleaves C-terminal arginine or lysine residues from biologically active peptides such as kinins or anaphylatoxins in the circulation thereby regulating their activities. Down-regulates fibrinolysis by removing C-terminal lysine residues from fibrin that has already been partially degraded by plasmin. The chain is Carboxypeptidase B2 (CPB2) from Bos taurus (Bovine).